The following is a 350-amino-acid chain: Cytosolic Fe-S cluster assembly factor NBP35 (350 aa).

Positions 1–30 (MENGDIPEDANEHCPGPQSESAGKSDSCAG) are disordered. Residues Cys14, Cys28, Cys31, and Cys37 each coordinate [4Fe-4S] cluster. 67-74 (GKGGVGKS) is a binding site for ATP.

It belongs to the Mrp/NBP35 ATP-binding proteins family. NUBP1/NBP35 subfamily. In terms of assembly, homodimer and homotetramer. Predominantly homodimeric. Requires [4Fe-4S] cluster as cofactor.

It localises to the cytoplasm. Component of the cytosolic iron-sulfur (Fe-S) protein assembly (CIA) machinery. Required for maturation of extramitochondrial Fe-S proteins. Functions as a Fe-S scaffold, mediating the de novo assembly of an Fe-S cluster and its transfer to target apoproteins. Essential for embryo development. The polypeptide is Cytosolic Fe-S cluster assembly factor NBP35 (Arabidopsis thaliana (Mouse-ear cress)).